We begin with the raw amino-acid sequence, 355 residues long: Acyl-CoA desaturase 1 (355 aa).

Residues 1-68 lie on the Cytoplasmic side of the membrane; sequence MPAHMLQEIS…EGPPPKLEYV (68 aa). Residues 9–20 are compositionally biased toward low complexity; it reads ISSSYTTTTTIT. Residues 9–33 are disordered; the sequence is ISSSYTTTTTITAPPSGNEREKVKT. The chain crosses the membrane as a helical span at residues 69 to 89; that stretch reads WRNIILMVLLHLGGLYGIILV. Asn-71 is a substrate binding site. The Lumenal segment spans residues 90–93; the sequence is PSCK. A helical transmembrane segment spans residues 94–114; sequence LYTCLFGIFYYMTSALGITAG. The Cytoplasmic segment spans residues 115-213; the sequence is AHRLWSHRTY…EKLVMFQRRY (99 aa). The Fe cation site is built by His-116 and His-121. A Histidine box-1 motif is present at residues 116-121; it reads HRLWSH. Residues Asn-144, Arg-151, and Asp-152 each coordinate substrate. Fe cation-binding residues include His-153, His-156, and His-157. Positions 153 to 157 match the Histidine box-2 motif; that stretch reads HRAHH. Arg-184 and Lys-185 together coordinate substrate. A helical transmembrane segment spans residues 214-233; it reads YKPGLLLMCFILPTLVPWYC. The Lumenal segment spans residues 234 to 237; it reads WGET. A helical transmembrane segment spans residues 238 to 259; the sequence is FVNSLFVSTFLRYTLVLNATWL. Trp-258 contacts substrate. At 260-355 the chain is on the cytoplasmic side; sequence VNSAAHLYGY…RTGDGSHKSS (96 aa). Residues His-265, His-294, His-297, and His-298 each coordinate Fe cation. The Histidine box-3 signature appears at 294 to 298; it reads HNYHH.

The protein belongs to the fatty acid desaturase type 1 family. Fe(2+) serves as cofactor. Detected in liver (at protein level). Detected in skin and liver. Detected in sebaceous gland, but not in hair follicle. Detected in white and brown adipose tissue, eyelid, Harderian gland, and at lower levels in Meibomian gland, eyeball and adrenal gland. Highly expressed in liver, and detected at low levels in brain, heart, lung, stomach, skeletal muscle and kidney.

It is found in the endoplasmic reticulum membrane. The protein localises to the microsome membrane. The catalysed reaction is octadecanoyl-CoA + 2 Fe(II)-[cytochrome b5] + O2 + 2 H(+) = (9Z)-octadecenoyl-CoA + 2 Fe(III)-[cytochrome b5] + 2 H2O. Stearoyl-CoA desaturase that utilizes O(2) and electrons from reduced cytochrome b5 to introduce the first double bond into saturated fatty acyl-CoA substrates. Catalyzes the insertion of a cis double bond at the Delta-9 position into fatty acyl-CoA substrates including palmitoyl-CoA and stearoyl-CoA. Gives rise to a mixture of 16:1 and 18:1 unsaturated fatty acids. Plays an important role in lipid biosynthesis. Plays an important role in regulating the expression of genes that are involved in lipogenesis and in regulating mitochondrial fatty acid oxidation. Plays an important role in body energy homeostasis. Contributes to the biosynthesis of membrane phospholipids, cholesterol esters and triglycerides. Required for normal development of sebaceous glands. Required for the biosynthesis of normal levels of Delta-9 unsaturated fatty acids and 1-alkyl-2,3-diacylglycerol in the Harderian gland. Required for normal production of meibum, an oily material that prevents drying of the cornea. In Mus musculus (Mouse), this protein is Acyl-CoA desaturase 1 (Scd1).